The chain runs to 21 residues: Cupiennin-6d (21 aa).

At serine 21 the chain carries Serine amide.

As to expression, expressed by the venom gland.

It localises to the secreted. The protein is Cupiennin-6d of Cupiennius salei (American wandering spider).